The primary structure comprises 412 residues: Argininosuccinate synthase (412 aa).

ATP is bound by residues 10 to 18 (AYSGGLDTS) and Ala36. The L-citrulline site is built by Tyr87 and Ser92. Position 87 is a phosphotyrosine (Tyr87). N6-acetyllysine is present on Lys112. The residue at position 113 (Tyr113) is a Phosphotyrosine. 115–123 (SHGATGKGN) provides a ligand contact to ATP. Residues Thr119, Asn123, and Asp124 each contribute to the L-aspartate site. Residue Asn123 participates in L-citrulline binding. Residue Arg127 participates in L-citrulline binding. Lys165 and Lys176 each carry N6-acetyllysine; by CLOCK. 2 positions are modified to phosphoserine: Ser177 and Ser180. L-citrulline-binding residues include Ser180 and Ser189. The residue at position 219 (Ser219) is a Phosphoserine. Residues Glu270 and Tyr282 each contribute to the L-citrulline site.

The protein belongs to the argininosuccinate synthase family. Type 1 subfamily. In terms of assembly, homotetramer. Interacts with NMRAL1. Interacts with CLOCK; in a circadian manner. Forms tissue-specific complexes with ASL, SLC7A1, HSP90AA1 and nitric oxide synthase NOS1, NOS2 or NOS3; the complex regulates cell-autonomous L-arginine synthesis and citrulline recycling while channeling extracellular L-arginine to nitric oxide synthesis pathway. In terms of processing, acetylated by CLOCK in a circadian manner which negatively regulates its enzyme activity. Deacetylated by histone deacetylases. As to expression, widely expressed.

The protein localises to the cytoplasm. The protein resides in the cytosol. The catalysed reaction is L-citrulline + L-aspartate + ATP = 2-(N(omega)-L-arginino)succinate + AMP + diphosphate + H(+). The protein operates within amino-acid biosynthesis; L-arginine biosynthesis; L-arginine from L-ornithine and carbamoyl phosphate: step 2/3. It functions in the pathway nitrogen metabolism; urea cycle; (N(omega)-L-arginino)succinate from L-aspartate and L-citrulline: step 1/1. Its function is as follows. One of the enzymes of the urea cycle, the metabolic pathway transforming neurotoxic amonia produced by protein catabolism into inocuous urea in the liver of ureotelic animals. Catalyzes the formation of arginosuccinate from aspartate, citrulline and ATP and together with ASL it is responsible for the biosynthesis of arginine in most body tissues. The sequence is that of Argininosuccinate synthase from Mus musculus (Mouse).